We begin with the raw amino-acid sequence, 595 residues long: Probable inactive glycosyltransferase 25 family member 3 (595 aa).

The first 24 residues, 1 to 24 (MRAAPAAPLLQLLLLLGPRPEAAG), serve as a signal peptide directing secretion. Residues Asn75, Asn153, Asn237, and Asn360 are each glycosylated (N-linked (GlcNAc...) asparagine). The interval 576–595 (RLDLAGGSGHSLRPHPRDEL) is disordered. The short motif at 592 to 595 (RDEL) is the Prevents secretion from ER element.

Belongs to the glycosyltransferase 25 family.

Its subcellular location is the endoplasmic reticulum lumen. Probable cell adhesion protein involved in leukocyte transmigration across the blood-brain barrier. Does not express any beta-galactosyltransferase activity in vitro. The protein is Probable inactive glycosyltransferase 25 family member 3 (CERCAM) of Bos taurus (Bovine).